The primary structure comprises 467 residues: Glutamate--tRNA ligase (467 aa).

Residues 9–19 carry the 'HIGH' region motif; sequence PSPTGYLHIGG. A 'KMSKS' region motif is present at residues 237-241; it reads KLSKR. K240 provides a ligand contact to ATP.

Belongs to the class-I aminoacyl-tRNA synthetase family. Glutamate--tRNA ligase type 1 subfamily. Monomer.

The protein localises to the cytoplasm. It catalyses the reaction tRNA(Glu) + L-glutamate + ATP = L-glutamyl-tRNA(Glu) + AMP + diphosphate. Functionally, catalyzes the attachment of glutamate to tRNA(Glu) in a two-step reaction: glutamate is first activated by ATP to form Glu-AMP and then transferred to the acceptor end of tRNA(Glu). The sequence is that of Glutamate--tRNA ligase from Xanthomonas euvesicatoria pv. vesicatoria (strain 85-10) (Xanthomonas campestris pv. vesicatoria).